The following is a 453-amino-acid chain: Serine/threonine-protein phosphatase 2A 55 kDa regulatory subunit B delta isoform (453 aa).

WD repeat units lie at residues 32 to 71 (AEAD…KSRP), 97 to 138 (EIEE…KRAE), 181 to 219 (AHTY…RSFN), and 230 to 270 (ELTE…LCDR). Position 285 is a phosphoserine (Ser285). 3 WD repeats span residues 289–327 (EIIS…RPVE), 344–385 (ENDC…DVTL), and 420–452 (DFNK…QDKI). Residue Tyr305 is modified to Phosphotyrosine. Thr308 is subject to Phosphothreonine.

Belongs to the phosphatase 2A regulatory subunit B family. As to quaternary structure, PP2A consists of a common heterodimeric core enzyme, composed of a 36 kDa catalytic subunit (subunit C) and a 65 kDa constant regulatory subunit (PR65 or subunit A), that associates with a variety of regulatory subunits. Proteins that associate with the core dimer include three families of regulatory subunits B (the R2/B/PR55/B55, R3/B''/PR72/PR130/PR59 and R5/B'/B56 families), the 48 kDa variable regulatory subunit, viral proteins, and cell signaling molecules. Interacts with ENSA (when phosphorylated at 'Ser-67') and ARPP19 (when phosphorylated at 'Ser-62'), leading to inhibit PP2A activity. Interacts with IER5.

It localises to the cytoplasm. Substrate-recognition subunit of protein phosphatase 2A (PP2A) that plays a key role in cell cycle by controlling mitosis entry and exit. Involved in chromosome clustering during late mitosis by mediating dephosphorylation of MKI67. The activity of PP2A complexes containing PPP2R2D (PR55-delta) fluctuate during the cell cycle: the activity is high in interphase and low in mitosis. The chain is Serine/threonine-protein phosphatase 2A 55 kDa regulatory subunit B delta isoform (PPP2R2D) from Homo sapiens (Human).